We begin with the raw amino-acid sequence, 136 residues long: MAALRYRRFLKLCEEWPVDETKRGRDLGAYLRQRVAQAFREGENTQIAEPEACDQMYESLARLHSNYYKHKYPRPRDTSFSGLSVEEYKLILSTDTLEEFQEMNKSMWKKLQEKFAPTRPEEKHKAWTRVLSRPRT.

A mitochondrion-targeting transit peptide spans 1–13 (MAALRYRRFLKLC).

Interacts with UQCC1. Forms a complex, named COMB/coordinator of mitochondrial CYTB biogenesis, composed of UQCC1, UQCC2, UQCC4, UQCC5 and UQCC6; stabilizes nascent cytochrome b/MT-CYB and promotes its membrane insertion. Forms a complex, named COMA, composed of UQCC1, UQCC2 and UQCC4; activates MT-CYB translation. Forms a complex, named COMC, composed of UQCC1, UQCC2; UQCC3 and UQCC4; mediates MT-CYB hemylation and association with the first nuclear-encoded CIII subunit UQCRQ. In terms of tissue distribution, widely expressed with highest levels in brain, liver, kidney, heart, skeletal muscle, thymus, testis and pancreas (at protein level).

It localises to the mitochondrion matrix. The protein resides in the mitochondrion nucleoid. Its subcellular location is the mitochondrion. It is found in the mitochondrion intermembrane space. The protein localises to the mitochondrion inner membrane. Required for the assembly of the ubiquinol-cytochrome c reductase complex (mitochondrial respiratory chain complex III or cytochrome b-c1 complex). Plays a role in the modulation of respiratory chain activities such as oxygen consumption and ATP production and via its modulation of the respiratory chain activity can regulate skeletal muscle differentiation and insulin secretion by pancreatic beta-cells. Involved in cytochrome b translation and/or stability. This is Ubiquinol-cytochrome c reductase complex assembly factor 2 (Uqcc2) from Mus musculus (Mouse).